A 420-amino-acid polypeptide reads, in one-letter code: Histidine--tRNA ligase (420 aa).

This sequence belongs to the class-II aminoacyl-tRNA synthetase family. As to quaternary structure, homodimer.

Its subcellular location is the cytoplasm. It catalyses the reaction tRNA(His) + L-histidine + ATP = L-histidyl-tRNA(His) + AMP + diphosphate + H(+). This is Histidine--tRNA ligase from Macrococcus caseolyticus (strain JCSC5402) (Macrococcoides caseolyticum).